An 863-amino-acid polypeptide reads, in one-letter code: Receptor-like protein Cf-9 (863 aa).

Positions 1–21 are cleaved as a signal peptide; sequence MDCVKLVFLMLYTFLCQLALS. The Extracellular portion of the chain corresponds to 22-812; that stretch reads SSLPHLCPED…EEDSPMISWQ (791 aa). The tract at residues 24–91 is N-cap; sequence LPHLCPEDQA…GVHCDETTGQ (68 aa). N-linked (GlcNAc...) asparagine glycosylation is found at Asn-48, Asn-72, Asn-109, Asn-127, Asn-142, Asn-191, Asn-204, and Asn-212. An LRR 1; degenerate repeat occupies 92–115; the sequence is VIALDLRCSQLQGKFHSNSSLFQL. 2 LRR repeats span residues 116 to 139 and 141 to 164; these read SNLK…KFGE and SNLT…ICHL. The stretch at 165–191 is one LRR 4; degenerate repeat; that stretch reads SKLHVLRICDQYGLSLVPYNFELLLKN. LRR repeat units follow at residues 192 to 214, 215 to 238, 241 to 263, 265 to 287, 288 to 312, 314 to 335, 336 to 358, 359 to 382, 383 to 406, 408 to 428, 429 to 452, 454 to 476, 477 to 500, 502 to 524, 525 to 549, 551 to 572, 573 to 597, 599 to 623, 667 to 690, 691 to 714, 715 to 739, and 741 to 759; these read LTQL…SNFS, SHLT…VFHL, LQSL…KWNS, ASLM…SFSH, LTSL…LWNL, NIVF…FTIF, EKLK…LSFN, TQLE…ISGL, QNLE…IFSL, SLVE…EFKS, KTLS…LLNQ, NLQL…ICNL, KTLI…VVER, EYLS…TFSV, GNIL…MINC, YLTL…WLGY, LFQL…GNTN, FMGL…ILGN, LDSN…IIGD, LVGL…SFQN, LSVL…LASL, and FLEV…IPKG. N-linked (GlcNAc...) asparagine glycosylation occurs at Asn-262. N-linked (GlcNAc...) asparagine glycosylation is found at Asn-300 and Asn-311. 3 N-linked (GlcNAc...) asparagine glycosylation sites follow: Asn-378, Asn-396, and Asn-416. Residue Asn-464 is glycosylated (N-linked (GlcNAc...) asparagine). N-linked (GlcNAc...) asparagine glycosylation occurs at Asn-519. N-linked (GlcNAc...) asparagine glycosylation is present at Asn-563. Residues Asn-698 and Asn-714 are each glycosylated (N-linked (GlcNAc...) asparagine). 2 N-linked (GlcNAc...) asparagine glycosylation sites follow: Asn-746 and Asn-767. The C-cap/acidic domain stretch occupies residues 760 to 812; the sequence is KQFDSFGNTSYQGNDGLRGFPLSKLCGGEDQVTTPAELDQEEEEEDSPMISWQ. Residues 813–833 traverse the membrane as a helical segment; sequence GVLVGYGCGLVIGLSVIYIMW. Residues 834–863 lie on the Cytoplasmic side of the membrane; that stretch reads STQYPAWFSRMDLKLEHIITTKMKKHKKRY.

The protein belongs to the RLP family. Interacts with thioredoxin-like protein CITRX.

It localises to the cell membrane. Functionally, involved in plant defense. Confers resistance to the fungal pathogen C.fulvum through recognition of the AVR9 elicitor protein. This chain is Receptor-like protein Cf-9, found in Solanum pimpinellifolium (Currant tomato).